Here is a 303-residue protein sequence, read N- to C-terminus: Phosphate import ATP-binding protein PstB (303 aa).

The region spanning 56-298 (LSTSDVHVYY…PDHQLTEAYI (243 aa)) is the ABC transporter domain. An ATP-binding site is contributed by 88-95 (GPSGCGKS).

It belongs to the ABC transporter superfamily. Phosphate importer (TC 3.A.1.7) family. In terms of assembly, the complex is composed of two ATP-binding proteins (PstB), two transmembrane proteins (PstC and PstA) and a solute-binding protein (PstS).

It is found in the cell inner membrane. It carries out the reaction phosphate(out) + ATP + H2O = ADP + 2 phosphate(in) + H(+). Functionally, part of the ABC transporter complex PstSACB involved in phosphate import. Responsible for energy coupling to the transport system. The polypeptide is Phosphate import ATP-binding protein PstB (Acinetobacter baylyi (strain ATCC 33305 / BD413 / ADP1)).